The chain runs to 362 residues: Alpha-glucoside transport ATP-binding protein AglK (362 aa).

The ABC transporter domain maps to 4–235; that stretch reads LLLKDIRKSY…PANLFVARFI (232 aa). 36 to 43 is an ATP binding site; that stretch reads GPSGCGKS.

The protein belongs to the ABC transporter superfamily.

Its subcellular location is the cell inner membrane. Its function is as follows. Part of the binding-protein-dependent transport system for alpha-glucosides such as sucrose, maltose and trehalose. Probably responsible for energy coupling to the transport system. This is Alpha-glucoside transport ATP-binding protein AglK (aglK) from Rhizobium meliloti (strain 1021) (Ensifer meliloti).